A 316-amino-acid chain; its full sequence is 4-diphosphocytidyl-2-C-methyl-D-erythritol kinase (316 aa).

Residue Lys-32 is part of the active site. 126-136 contributes to the ATP binding site; that stretch reads PVGAGLGGGSA. The active site involves Asp-168.

This sequence belongs to the GHMP kinase family. IspE subfamily.

The catalysed reaction is 4-CDP-2-C-methyl-D-erythritol + ATP = 4-CDP-2-C-methyl-D-erythritol 2-phosphate + ADP + H(+). Its pathway is isoprenoid biosynthesis; isopentenyl diphosphate biosynthesis via DXP pathway; isopentenyl diphosphate from 1-deoxy-D-xylulose 5-phosphate: step 3/6. In terms of biological role, catalyzes the phosphorylation of the position 2 hydroxy group of 4-diphosphocytidyl-2C-methyl-D-erythritol. The chain is 4-diphosphocytidyl-2-C-methyl-D-erythritol kinase from Bifidobacterium longum subsp. infantis (strain ATCC 15697 / DSM 20088 / JCM 1222 / NCTC 11817 / S12).